A 95-amino-acid chain; its full sequence is uncharacterized protein (95 aa).

Positions 1 to 12 are enriched in low complexity; sequence MQNFMNNLSGGS. A disordered region spans residues 1 to 27; sequence MQNFMNNLSGGSNKEGGEKSNDFLSSA.

This is an uncharacterized protein from Schizosaccharomyces pombe (strain 972 / ATCC 24843) (Fission yeast).